A 492-amino-acid chain; its full sequence is Pre-mRNA-splicing factor sap61 (492 aa).

A C2H2-type zinc finger spans residues 243–267 (FYCEVCQKFFGKITVFEAHKKSKAH). Disordered stretches follow at residues 268-291 (NKAV…KQKG) and 337-365 (AAER…QDDE). Low complexity predominate over residues 276–286 (SSSPSTTSNTN). Over residues 345–354 (QSTPSVSVEG) the composition is skewed to polar residues. Positions 355–365 (NQDEESDQDDE) are enriched in acidic residues. At Ser-360 the chain carries Phosphoserine. A Matrin-type zinc finger spans residues 397-428 (FPCEICGNYVYMGRKAFDKHFTEQRHIYGLKC).

Belongs to the SF3A3 family. Belongs to the 40S cdc5-associated complex (or cwf complex), a spliceosome sub-complex reminiscent of a late-stage spliceosome composed of the U2, U5 and U6 snRNAs and at least brr2, cdc5, cwf2/prp3, cwf3/syf1, cwf4/syf3, cwf5/ecm2, spp42/cwf6, cwf7/spf27, cwf8, cwf9, cwf10, cwf11, cwf12, prp45/cwf13, cwf14, cwf15, cwf16, cwf17, cwf18, cwf19, cwf20, cwf21, cwf22, cwf23, cwf24, cwf25, cwf26, cyp7/cwf27, cwf28, cwf29/ist3, lea1, msl1, prp5/cwf1, prp10, prp12/sap130, prp17, prp22, sap61, sap62, sap114, sap145, slu7, smb1, smd1, smd3, smf1, smg1 and syf2.

Its subcellular location is the nucleus. The protein resides in the cytoplasm. In terms of biological role, involved in mRNA splicing where it associates with cdc5 and the other cwf proteins as part of the spliceosome. This is Pre-mRNA-splicing factor sap61 (sap61) from Schizosaccharomyces pombe (strain 972 / ATCC 24843) (Fission yeast).